The primary structure comprises 322 residues: Sideroflexin-2 (322 aa).

Met-1 is modified (N-acetylmethionine). The next 5 helical transmembrane spans lie at 100–122 (MIIT…WQWV), 142–164 (SVRQ…AVGM), 174–192 (LVGR…CVNI), 228–250 (VVIS…MERL), and 265–287 (PLQV…GLFP).

It belongs to the sideroflexin family.

The protein localises to the mitochondrion inner membrane. The protein resides in the mitochondrion outer membrane. The catalysed reaction is L-serine(in) = L-serine(out). Mitochondrial amino-acid transporter that mediates transport of serine into mitochondria. Involved in mitochondrial iron homeostasis by regulating heme biosynthesis. In Bos taurus (Bovine), this protein is Sideroflexin-2.